The chain runs to 236 residues: RING-H2 finger protein ATL7 (236 aa).

Residues 31-51 (AFIFSVPICFTFIVLFVLYVI) traverse the membrane as a helical segment. The segment at 111-153 (CSVCLGDYQAEEKLQQMPSCGHTFHMECIDLWLTSHTTCPLCR) adopts an RING-type; atypical zinc-finger fold. Polar residues predominate over residues 176–196 (ENSNGGEASTQPDSQSATEAI). Residues 176–236 (ENSNGGEAST…SDGCCTCRLG (61 aa)) form a disordered region. Positions 197–221 (SHTDDVEEGNRDSQEVSKETEENDR) are enriched in basic and acidic residues.

This sequence belongs to the RING-type zinc finger family. ATL subfamily.

The protein localises to the membrane. It carries out the reaction S-ubiquitinyl-[E2 ubiquitin-conjugating enzyme]-L-cysteine + [acceptor protein]-L-lysine = [E2 ubiquitin-conjugating enzyme]-L-cysteine + N(6)-ubiquitinyl-[acceptor protein]-L-lysine.. It participates in protein modification; protein ubiquitination. This Arabidopsis thaliana (Mouse-ear cress) protein is RING-H2 finger protein ATL7 (ATL7).